The chain runs to 329 residues: Nitrogenase iron-iron protein beta chain (329 aa).

4 residues coordinate [8Fe-7S] cluster: Cys20, Cys45, Cys104, and Ser143. Positions 213-288 (SADGSLVSHG…EEGDGKPIPQ (76 aa)) are disordered. Residues 257 to 271 (RSRRSSARPRSHPQY) show a composition bias toward basic residues.

The protein belongs to the NifD/NifK/NifE/NifN family. As to quaternary structure, hexamer of two alpha, two beta, and two delta chains. It depends on [8Fe-7S] cluster as a cofactor.

The enzyme catalyses N2 + 8 reduced [2Fe-2S]-[ferredoxin] + 16 ATP + 16 H2O = H2 + 8 oxidized [2Fe-2S]-[ferredoxin] + 2 NH4(+) + 16 ADP + 16 phosphate + 6 H(+). In terms of biological role, this iron-iron protein is part of the nitrogenase complex that catalyzes the key enzymatic reactions in nitrogen fixation. Other nitrogenase complexes utilize a molybdenum-iron protein or a vanadium-iron protein. This chain is Nitrogenase iron-iron protein beta chain (anfK), found in Ruminiclostridium hungatei (Clostridium hungatei).